The sequence spans 273 residues: 3-methyl-2-oxobutanoate hydroxymethyltransferase (273 aa).

D53 and D92 together coordinate Mg(2+). 3-methyl-2-oxobutanoate-binding positions include D53–S54, D92, and K122. E124 is a binding site for Mg(2+). E191 acts as the Proton acceptor in catalysis.

It belongs to the PanB family. In terms of assembly, homodecamer; pentamer of dimers. It depends on Mg(2+) as a cofactor.

The protein localises to the cytoplasm. The catalysed reaction is 3-methyl-2-oxobutanoate + (6R)-5,10-methylene-5,6,7,8-tetrahydrofolate + H2O = 2-dehydropantoate + (6S)-5,6,7,8-tetrahydrofolate. It functions in the pathway cofactor biosynthesis; (R)-pantothenate biosynthesis; (R)-pantoate from 3-methyl-2-oxobutanoate: step 1/2. Functionally, catalyzes the reversible reaction in which hydroxymethyl group from 5,10-methylenetetrahydrofolate is transferred onto alpha-ketoisovalerate to form ketopantoate. This chain is 3-methyl-2-oxobutanoate hydroxymethyltransferase, found in Bacteroides fragilis (strain ATCC 25285 / DSM 2151 / CCUG 4856 / JCM 11019 / LMG 10263 / NCTC 9343 / Onslow / VPI 2553 / EN-2).